Consider the following 339-residue polypeptide: Ketol-acid reductoisomerase (NADP(+)) (339 aa).

The KARI N-terminal Rossmann domain maps to 1–182 (MRVYYDRDAD…GGGRAGIIET (182 aa)). NADP(+) is bound by residues 24–27 (YGSQ), arginine 48, serine 51, threonine 53, and 83–86 (DELQ). Histidine 108 is a catalytic residue. Residue glycine 134 participates in NADP(+) binding. The region spanning 183–328 (SFKEECETDL…AKLRDMMPWI (146 aa)) is the KARI C-terminal knotted domain. Aspartate 191, glutamate 195, glutamate 227, and glutamate 231 together coordinate Mg(2+). Serine 252 contacts substrate.

It belongs to the ketol-acid reductoisomerase family. Mg(2+) is required as a cofactor.

The enzyme catalyses (2R)-2,3-dihydroxy-3-methylbutanoate + NADP(+) = (2S)-2-acetolactate + NADPH + H(+). The catalysed reaction is (2R,3R)-2,3-dihydroxy-3-methylpentanoate + NADP(+) = (S)-2-ethyl-2-hydroxy-3-oxobutanoate + NADPH + H(+). It participates in amino-acid biosynthesis; L-isoleucine biosynthesis; L-isoleucine from 2-oxobutanoate: step 2/4. It functions in the pathway amino-acid biosynthesis; L-valine biosynthesis; L-valine from pyruvate: step 2/4. Involved in the biosynthesis of branched-chain amino acids (BCAA). Catalyzes an alkyl-migration followed by a ketol-acid reduction of (S)-2-acetolactate (S2AL) to yield (R)-2,3-dihydroxy-isovalerate. In the isomerase reaction, S2AL is rearranged via a Mg-dependent methyl migration to produce 3-hydroxy-3-methyl-2-ketobutyrate (HMKB). In the reductase reaction, this 2-ketoacid undergoes a metal-dependent reduction by NADPH to yield (R)-2,3-dihydroxy-isovalerate. This Rhodopseudomonas palustris (strain HaA2) protein is Ketol-acid reductoisomerase (NADP(+)).